Reading from the N-terminus, the 392-residue chain is MGLLRGGAACARAMARLGALRSHYCALLLAAALAVCAFYYLGSGRETFSSATKRLKEARAGAAAPTPPAPELARGSAAPASGAKAKSLEGGVVVPVDYHLLMMFTKAEHNAPLQAKARVALSSLLRLAKFEAHEVLNLHFVSEEASREVAKALLRELLPPAAGFKCKVIFHDVAVLTDKLFPVVEAMQKYFSAGSGTYYSDSIFFLSVAMHQIMPKEIPRIIQLDLDLKYKTNIRELFEEFDNFLPGAVIGIAREMQPVYRHTFWQFRHENPKTRVGDPPPEGLPGFNSGVMLLNLEAMRQSPLYSHLLEPSWVQQLADKYHFRGHLGDQDFFTMIGMEHPELFHVLDCTWNRQLCTWWRDHGYSDVFQAYFRCEGHVKIYHGNCNTPIPED.

At 1 to 19 (MGLLRGGAACARAMARLGA) the chain is on the cytoplasmic side. A helical; Signal-anchor for type II membrane protein transmembrane segment spans residues 20–42 (LRSHYCALLLAAALAVCAFYYLG). The Lumenal portion of the chain corresponds to 43-392 (SGRETFSSAT…GNCNTPIPED (350 aa)). 103–105 (MFT) serves as a coordination point for UDP-alpha-D-xylose. Aspartate 225 is a Mn(2+) binding site. A UDP-alpha-D-xylose-binding site is contributed by leucine 226. Residue aspartate 227 participates in Mn(2+) binding. The segment at 262–265 (HTFW) is interaction with target proteins. Positions 289, 327, and 330 each coordinate UDP-alpha-D-xylose. The a glycoprotein site is built by glutamine 330 and tryptophan 359. Cystine bridges form between cysteine 349-cysteine 374 and cysteine 356-cysteine 385. A Mn(2+)-binding site is contributed by histidine 382. Asparagine 384 contacts a glycoprotein.

Belongs to the glycosyltransferase 8 family. As to quaternary structure, homodimer. Dimer formation may be essential for the retention in endoplasmic reticulum. It depends on Mg(2+) as a cofactor. Mn(2+) is required as a cofactor.

The protein localises to the endoplasmic reticulum membrane. The catalysed reaction is 3-O-[alpha-D-xylosyl-(1-&gt;3)-beta-D-glucosyl]-L-seryl-[EGF-like domain protein] + UDP-alpha-D-xylose = 3-O-[alpha-D-xylosyl-(1-&gt;3)-alpha-D-xylosyl-(1-&gt;3)-beta-D-glucosyl]-L-seryl-[EGF-like domain protein] + UDP + H(+). Functionally, alpha-1,3-xylosyltransferase, which elongates the O-linked xylose-glucose disaccharide attached to EGF-like repeats in the extracellular domain of target proteins by catalyzing the addition of the second xylose. Known targets include Notch proteins and coagulation factors, such as F9. This Mus musculus (Mouse) protein is Xyloside xylosyltransferase 1 (Xxylt1).